Consider the following 144-residue polypeptide: D-aminoacyl-tRNA deacylase (144 aa).

The short motif at 136 to 137 (GP) is the Gly-cisPro motif, important for rejection of L-amino acids element.

Belongs to the DTD family. In terms of assembly, homodimer.

It localises to the cytoplasm. The enzyme catalyses glycyl-tRNA(Ala) + H2O = tRNA(Ala) + glycine + H(+). It carries out the reaction a D-aminoacyl-tRNA + H2O = a tRNA + a D-alpha-amino acid + H(+). Its function is as follows. An aminoacyl-tRNA editing enzyme that deacylates mischarged D-aminoacyl-tRNAs. Also deacylates mischarged glycyl-tRNA(Ala), protecting cells against glycine mischarging by AlaRS. Acts via tRNA-based rather than protein-based catalysis; rejects L-amino acids rather than detecting D-amino acids in the active site. By recycling D-aminoacyl-tRNA to D-amino acids and free tRNA molecules, this enzyme counteracts the toxicity associated with the formation of D-aminoacyl-tRNA entities in vivo and helps enforce protein L-homochirality. The protein is D-aminoacyl-tRNA deacylase of Haemophilus ducreyi (strain 35000HP / ATCC 700724).